Consider the following 1023-residue polypeptide: FHIP family protein AGAP011705 (1023 aa).

3 stretches are compositionally biased toward polar residues: residues 1 to 13, 806 to 825, and 868 to 888; these read MSWLRSSPLRQSF, SMTSSLSQTTPMQLTPSSSY, and GLNHSPNGRQQPQSYTPASMN. Disordered regions lie at residues 1-39 and 797-927; these read MSWLRSSPLRQSFSKSGNNSNSNGGGSANDRSRSGAGGG and GKLL…AETQ. Over residues 889–906 the composition is skewed to low complexity; that stretch reads VPSPVGQQQHQHQSVSSV.

This sequence belongs to the FHIP family.

The chain is FHIP family protein AGAP011705 from Anopheles gambiae (African malaria mosquito).